A 56-amino-acid chain; its full sequence is Large ribosomal subunit protein bL32 (56 aa).

Residues 1-16 are compositionally biased toward basic residues; sequence MAVQKSKKSRSRRGMR. The tract at residues 1-38 is disordered; the sequence is MAVQKSKKSRSRRGMRRSHDAVTPENLSVDPVSGETHR.

Belongs to the bacterial ribosomal protein bL32 family.

The chain is Large ribosomal subunit protein bL32 from Colwellia psychrerythraea (strain 34H / ATCC BAA-681) (Vibrio psychroerythus).